Here is a 352-residue protein sequence, read N- to C-terminus: Ion-translocating oxidoreductase complex subunit D (352 aa).

A run of 4 helical transmembrane segments spans residues 20–40 (IMLL…WFFG), 42–62 (GTLF…AIVL), 69–91 (VASH…SIPP), and 123–143 (PAMI…TSWL). FMN phosphoryl threonine is present on threonine 187. Helical transmembrane passes span 215-235 (LAGV…VFLL), 242-262 (WHIP…GWLF), 267-287 (LASP…FFIL), 301-321 (LIFG…GGYP), and 322-342 (DGVA…DYYT).

It belongs to the NqrB/RnfD family. In terms of assembly, the complex is composed of six subunits: RsxA, RsxB, RsxC, RsxD, RsxE and RsxG. It depends on FMN as a cofactor.

The protein resides in the cell inner membrane. In terms of biological role, part of a membrane-bound complex that couples electron transfer with translocation of ions across the membrane. Required to maintain the reduced state of SoxR. The chain is Ion-translocating oxidoreductase complex subunit D from Salmonella agona (strain SL483).